A 237-amino-acid polypeptide reads, in one-letter code: Ribosomal RNA small subunit methyltransferase G (237 aa).

Residues Gly-78, Phe-83, 129–130 (AE), and Arg-146 each bind S-adenosyl-L-methionine.

This sequence belongs to the methyltransferase superfamily. RNA methyltransferase RsmG family.

Its subcellular location is the cytoplasm. Specifically methylates the N7 position of a guanine in 16S rRNA. The sequence is that of Ribosomal RNA small subunit methyltransferase G from Mesoplasma florum (strain ATCC 33453 / NBRC 100688 / NCTC 11704 / L1) (Acholeplasma florum).